A 271-amino-acid polypeptide reads, in one-letter code: Acetyl-coenzyme A carboxylase carboxyl transferase subunit alpha (271 aa).

The region spanning methionine 1–glutamate 247 is the CoA carboxyltransferase C-terminal domain.

Belongs to the AccA family. In terms of assembly, acetyl-CoA carboxylase is a heterohexamer composed of biotin carboxyl carrier protein (AccB), biotin carboxylase (AccC) and two subunits each of ACCase subunit alpha (AccA) and ACCase subunit beta (AccD).

It localises to the cytoplasm. The catalysed reaction is N(6)-carboxybiotinyl-L-lysyl-[protein] + acetyl-CoA = N(6)-biotinyl-L-lysyl-[protein] + malonyl-CoA. It functions in the pathway lipid metabolism; malonyl-CoA biosynthesis; malonyl-CoA from acetyl-CoA: step 1/1. Functionally, component of the acetyl coenzyme A carboxylase (ACC) complex. First, biotin carboxylase catalyzes the carboxylation of biotin on its carrier protein (BCCP) and then the CO(2) group is transferred by the carboxyltransferase to acetyl-CoA to form malonyl-CoA. The protein is Acetyl-coenzyme A carboxylase carboxyl transferase subunit alpha of Clostridium perfringens (strain SM101 / Type A).